The following is a 77-amino-acid chain: Protein RALF-like 17 (77 aa).

Positions 1–29 (MAASREFIICCFLTLLLCNFFMRVESGAA) are cleaved as a signal peptide. A disulfide bond links cysteine 37 and cysteine 51.

It belongs to the plant rapid alkalinization factor (RALF) family.

The protein localises to the secreted. Cell signaling peptide that may regulate plant stress, growth, and development. Mediates a rapid alkalinization of extracellular space by mediating a transient increase in the cytoplasmic Ca(2+) concentration leading to a calcium-dependent signaling events through a cell surface receptor and a concomitant activation of some intracellular mitogen-activated protein kinases. The polypeptide is Protein RALF-like 17 (RALFL17) (Arabidopsis thaliana (Mouse-ear cress)).